Reading from the N-terminus, the 416-residue chain is Enterobactin exporter EntS (416 aa).

The Cytoplasmic segment spans residues 1–21 (MNKQSWLLNLSLLKTHPAFRA). The chain crosses the membrane as a helical span at residues 22 to 42 (VFLARFISIVSLGLLGVAVPV). At 43–55 (QIQMMTHSTWQVG) the chain is on the periplasmic side. Residues 56 to 76 (LSVTLTGGAMFVGLMVGGVLA) traverse the membrane as a helical segment. At 77-83 (DRYERKK) the chain is on the cytoplasmic side. A helical transmembrane segment spans residues 84-104 (VILLARGTCGIGFIGLCLNAL). At 105 to 109 (LPEPS) the chain is on the periplasmic side. The helical transmembrane segment at 110 to 130 (LLAIYLLGLWDGFFASLGVTA) threads the bilayer. Residues 131–156 (LLAATPALVGRENLMQAGAITMLTVR) lie on the Cytoplasmic side of the membrane. The chain crosses the membrane as a helical span at residues 157–177 (LGSVISPMIGGLLLATGGVAW). A topological domain (periplasmic) is located at residue Asn178. Residues 179-199 (YGLAAAGTFITLLPLLSLPAL) form a helical membrane-spanning segment. Over 200–218 (PPPPQPREHPLKSLLAGFR) the chain is Cytoplasmic. Residues 219 to 239 (FLLASPLVGGIALLGGLLTMA) form a helical membrane-spanning segment. At 240–256 (SAVRVLYPALADNWQMS) the chain is on the periplasmic side. A helical transmembrane segment spans residues 257-277 (AAQIGFLYAAIPLGAAIGALT). The Cytoplasmic segment spans residues 278 to 287 (SGKLAHSARP). Residues 288-307 (GLLMLLSTLGSFLAIGLFGL) traverse the membrane as a helical segment. The Periplasmic segment spans residues 308–313 (MPMWIL). Residues 314-336 (GVVCLALFGWLSAVSSLLQYTML) traverse the membrane as a helical segment. Residues 337–356 (QTQTPEAMLGRINGLWTAQN) lie on the Cytoplasmic side of the membrane. Residues 357–377 (VTGDAIGAALLGGLGAMMTPV) traverse the membrane as a helical segment. A topological domain (periplasmic) is located at residue Ala378. The helical transmembrane segment at 379-399 (SASASGFGLLIIGVLLLLVLV) threads the bilayer. At 400–416 (ELRRFRQTPPQMTASDS) the chain is on the cytoplasmic side.

The protein belongs to the major facilitator superfamily. EntS (TC 2.A.1.38) family.

It localises to the cell inner membrane. Component of an export pathway for enterobactin. The protein is Enterobactin exporter EntS of Escherichia coli O7:K1 (strain IAI39 / ExPEC).